A 554-amino-acid polypeptide reads, in one-letter code: 2-succinyl-5-enolpyruvyl-6-hydroxy-3-cyclohexene-1-carboxylate synthase (554 aa).

This sequence belongs to the TPP enzyme family. MenD subfamily. Homodimer. Mg(2+) serves as cofactor. It depends on Mn(2+) as a cofactor. Requires thiamine diphosphate as cofactor.

The catalysed reaction is isochorismate + 2-oxoglutarate + H(+) = 5-enolpyruvoyl-6-hydroxy-2-succinyl-cyclohex-3-ene-1-carboxylate + CO2. Its pathway is quinol/quinone metabolism; 1,4-dihydroxy-2-naphthoate biosynthesis; 1,4-dihydroxy-2-naphthoate from chorismate: step 2/7. It participates in quinol/quinone metabolism; menaquinone biosynthesis. Functionally, catalyzes the thiamine diphosphate-dependent decarboxylation of 2-oxoglutarate and the subsequent addition of the resulting succinic semialdehyde-thiamine pyrophosphate anion to isochorismate to yield 2-succinyl-5-enolpyruvyl-6-hydroxy-3-cyclohexene-1-carboxylate (SEPHCHC). This chain is 2-succinyl-5-enolpyruvyl-6-hydroxy-3-cyclohexene-1-carboxylate synthase, found in Mycobacterium tuberculosis (strain ATCC 25177 / H37Ra).